A 215-amino-acid chain; its full sequence is Pyrophosphatase PpaX (215 aa).

D9 (nucleophile) is an active-site residue.

It belongs to the HAD-like hydrolase superfamily. PpaX family. Mg(2+) is required as a cofactor.

The catalysed reaction is diphosphate + H2O = 2 phosphate + H(+). Functionally, hydrolyzes pyrophosphate formed during P-Ser-HPr dephosphorylation by HPrK/P. Might play a role in controlling the intracellular pyrophosphate pool. The protein is Pyrophosphatase PpaX of Halalkalibacterium halodurans (strain ATCC BAA-125 / DSM 18197 / FERM 7344 / JCM 9153 / C-125) (Bacillus halodurans).